We begin with the raw amino-acid sequence, 636 residues long: 1-deoxy-D-xylulose-5-phosphate synthase (636 aa).

Thiamine diphosphate is bound by residues His-74 and 115 to 117 (GHA). Asp-146 serves as a coordination point for Mg(2+). Residues 147 to 148 (GA), Asn-175, Tyr-285, and Glu-368 contribute to the thiamine diphosphate site. Asn-175 contributes to the Mg(2+) binding site.

Belongs to the transketolase family. DXPS subfamily. As to quaternary structure, homodimer. The cofactor is Mg(2+). Thiamine diphosphate serves as cofactor.

The catalysed reaction is D-glyceraldehyde 3-phosphate + pyruvate + H(+) = 1-deoxy-D-xylulose 5-phosphate + CO2. It participates in metabolic intermediate biosynthesis; 1-deoxy-D-xylulose 5-phosphate biosynthesis; 1-deoxy-D-xylulose 5-phosphate from D-glyceraldehyde 3-phosphate and pyruvate: step 1/1. In terms of biological role, catalyzes the acyloin condensation reaction between C atoms 2 and 3 of pyruvate and glyceraldehyde 3-phosphate to yield 1-deoxy-D-xylulose-5-phosphate (DXP). The protein is 1-deoxy-D-xylulose-5-phosphate synthase of Anaeromyxobacter sp. (strain K).